A 496-amino-acid chain; its full sequence is Thiamine transporter 2 (496 aa).

Residues 1 to 7 are Cytoplasmic-facing; that stretch reads MDCYRTS. The helical transmembrane segment at 8-28 threads the bilayer; that stretch reads LSSSWIYPTVILCLFGFFSMM. Over 29–53 the chain is Extracellular; that stretch reads RPSEPFLIPYLSGPDKNLTSAEITN. Asn45 carries N-linked (GlcNAc...) asparagine glycosylation. A helical transmembrane segment spans residues 54–74; sequence EIFPVWTYSYLVLLLPVFVLT. Over 75-81 the chain is Cytoplasmic; the sequence is DYVRYKP. Residues 82–102 traverse the membrane as a helical segment; the sequence is VIILQGISFIITWLLLLFGQG. At 103 to 110 the chain is on the extracellular side; it reads VKTMQVVE. The chain crosses the membrane as a helical span at residues 111 to 131; that stretch reads FFYGMVTAAEVAYYAYIYSVV. Residues 132–144 lie on the Cytoplasmic side of the membrane; it reads SPEHYQRVSGYCR. Residues 145–165 form a helical membrane-spanning segment; the sequence is SVTLAAYTAGSVLAQLLVSLA. Asn166 is a glycosylation site (N-linked (GlcNAc...) asparagine). The Extracellular segment spans residues 166 to 169; that stretch reads NMSY. A helical membrane pass occupies residues 170-190; sequence FYLNVISLASVSVAFLFSLFL. The Cytoplasmic segment spans residues 191–282; sequence PMPKKSMFFH…YSSKRLFYWS (92 aa). Residues 283–303 form a helical membrane-spanning segment; the sequence is LWWAFATAGFNQVLNYVQILW. The Extracellular portion of the chain corresponds to 304 to 316; that stretch reads DYKAPSQDSSIYN. The chain crosses the membrane as a helical span at residues 317–337; sequence GAVEAIATFGGAVAAFAVGYV. Over 338 to 342 the chain is Cytoplasmic; sequence KVNWD. A helical membrane pass occupies residues 343-363; the sequence is LLGELALVVFSVVNAGSLFLM. Over 364 to 375 the chain is Extracellular; the sequence is HYTANIWACYAG. A helical membrane pass occupies residues 376–396; it reads YLIFKSSYMLLITIAVFQIAV. At 397 to 405 the chain is on the cytoplasmic side; sequence NLNVERYAL. Residues 406 to 426 form a helical membrane-spanning segment; that stretch reads VFGINTFIALVIQTIMTVIVV. The Extracellular portion of the chain corresponds to 427–434; that stretch reads DQRGLNLP. A helical membrane pass occupies residues 435–455; it reads VSIQFLVYGSYFAVIAGIFLM. Topologically, residues 456–496 are cytoplasmic; the sequence is RSMYITYSTKSQKDVQSPAPSENPDVSHPEEESNIIMSTKL. The tract at residues 468–496 is disordered; that stretch reads KDVQSPAPSENPDVSHPEEESNIIMSTKL.

Belongs to the reduced folate carrier (RFC) transporter (TC 2.A.48) family. In terms of tissue distribution, widely expressed but most abundant in placenta, kidney and liver.

It localises to the membrane. The enzyme catalyses thiamine(out) + H(+)(in) = thiamine(in) + H(+)(out). The catalysed reaction is pyridoxine(out) + n H(+)(out) = pyridoxine(in) + n H(+)(in). Pyridoxine transport is inhibited by carbonyl cyanide p-trifluoromethoxyphenylhydrazone (FCCP) and carbonyl cyanide m-chlorophenylhydrazone (CCCP). In terms of biological role, mediates high affinity thiamine uptake, probably via a proton anti-port mechanism. Has no folate transport activity. Mediates H(+)-dependent pyridoxine transport. The chain is Thiamine transporter 2 (SLC19A3) from Homo sapiens (Human).